Reading from the N-terminus, the 198-residue chain is Holliday junction branch migration complex subunit RuvA (198 aa).

Residues 1 to 63 form a domain I region; that stretch reads MYDYIKGQLT…EDAQLLFGFH (63 aa). The interval 64–142 is domain II; sequence SEEEKDVFLK…EAPKEESSKL (79 aa). The segment at 143 to 147 is flexible linker; it reads PKAKH. Residues 148–198 are domain III; that stretch reads QENEQLDEAIEALLALGYKATELKKIRAFFEGTSETAEQYIKSALKMLMKG.

This sequence belongs to the RuvA family. In terms of assembly, homotetramer. Forms an RuvA(8)-RuvB(12)-Holliday junction (HJ) complex. HJ DNA is sandwiched between 2 RuvA tetramers; dsDNA enters through RuvA and exits via RuvB. An RuvB hexamer assembles on each DNA strand where it exits the tetramer. Each RuvB hexamer is contacted by two RuvA subunits (via domain III) on 2 adjacent RuvB subunits; this complex drives branch migration. In the full resolvosome a probable DNA-RuvA(4)-RuvB(12)-RuvC(2) complex forms which resolves the HJ.

Its subcellular location is the cytoplasm. The RuvA-RuvB-RuvC complex processes Holliday junction (HJ) DNA during genetic recombination and DNA repair, while the RuvA-RuvB complex plays an important role in the rescue of blocked DNA replication forks via replication fork reversal (RFR). RuvA specifically binds to HJ cruciform DNA, conferring on it an open structure. The RuvB hexamer acts as an ATP-dependent pump, pulling dsDNA into and through the RuvAB complex. HJ branch migration allows RuvC to scan DNA until it finds its consensus sequence, where it cleaves and resolves the cruciform DNA. This is Holliday junction branch migration complex subunit RuvA from Streptococcus equi subsp. zooepidemicus (strain MGCS10565).